A 588-amino-acid chain; its full sequence is Probable urocanate hydratase (588 aa).

The segment covering 1–15 (MDTPSAAAETSEPSA) has biased composition (low complexity). Residues 1–22 (MDTPSAAAETSEPSAQWQAYRG) form a disordered region. Residues 62–63 (GG), Q140, 188–190 (GMG), E208, R213, 254–255 (NA), 275–279 (QTSAH), and Y334 each bind NAD(+). C431 is a catalytic residue. NAD(+) is bound at residue G520.

Belongs to the urocanase family. Requires NAD(+) as cofactor.

The protein resides in the cytoplasm. The catalysed reaction is 4-imidazolone-5-propanoate = trans-urocanate + H2O. It participates in amino-acid degradation; L-histidine degradation into L-glutamate; N-formimidoyl-L-glutamate from L-histidine: step 2/3. In terms of biological role, catalyzes the conversion of urocanate to 4-imidazolone-5-propionate. The protein is Probable urocanate hydratase of Halobacterium salinarum (strain ATCC 29341 / DSM 671 / R1).